The chain runs to 271 residues: Putative protein FAM220BP (271 aa).

In Homo sapiens (Human), this protein is Putative protein FAM220BP (FAM220BP).